The sequence spans 1059 residues: Carbamoyl phosphate synthase large chain (1059 aa).

Residues 1–401 (MPKRTDIHKI…ALLKAVASLE (401 aa)) form a carboxyphosphate synthetic domain region. Positions 129, 169, 175, 176, 208, 210, 215, 241, 242, 243, 284, and 298 each coordinate ATP. One can recognise an ATP-grasp 1 domain in the interval 133–327 (KELMQELGEP…IAKLAAKIAV (195 aa)). 3 residues coordinate Mg(2+): Gln-284, Glu-298, and Asn-300. Mn(2+) is bound by residues Gln-284, Glu-298, and Asn-300. Residues 402–546 (IDQKDLLSKE…YSTYETENES (145 aa)) form an oligomerization domain region. The interval 547–929 (RRSAKPSVLV…ALYKAFAGAG (383 aa)) is carbamoyl phosphate synthetic domain. Positions 671 to 861 (DQVIKDLNLR…MAQLATKVIL (191 aa)) constitute an ATP-grasp 2 domain. Arg-707, Ala-746, Leu-748, Glu-752, Gly-777, Val-778, His-779, Ser-780, Gln-820, and Glu-832 together coordinate ATP. Mg(2+) contacts are provided by Gln-820, Glu-832, and Asn-834. Mn(2+) is bound by residues Gln-820, Glu-832, and Asn-834. The region spanning 930–1059 (MEVPDNGAVL…EMTSFKTTEL (130 aa)) is the MGS-like domain. An allosteric domain region spans residues 930-1059 (MEVPDNGAVL…EMTSFKTTEL (130 aa)).

It belongs to the CarB family. In terms of assembly, composed of two chains; the small (or glutamine) chain promotes the hydrolysis of glutamine to ammonia, which is used by the large (or ammonia) chain to synthesize carbamoyl phosphate. Tetramer of heterodimers (alpha,beta)4. The cofactor is Mg(2+). Requires Mn(2+) as cofactor.

It catalyses the reaction hydrogencarbonate + L-glutamine + 2 ATP + H2O = carbamoyl phosphate + L-glutamate + 2 ADP + phosphate + 2 H(+). The enzyme catalyses hydrogencarbonate + NH4(+) + 2 ATP = carbamoyl phosphate + 2 ADP + phosphate + 2 H(+). Its pathway is amino-acid biosynthesis; L-arginine biosynthesis; carbamoyl phosphate from bicarbonate: step 1/1. It functions in the pathway pyrimidine metabolism; UMP biosynthesis via de novo pathway; (S)-dihydroorotate from bicarbonate: step 1/3. In terms of biological role, large subunit of the glutamine-dependent carbamoyl phosphate synthetase (CPSase). CPSase catalyzes the formation of carbamoyl phosphate from the ammonia moiety of glutamine, carbonate, and phosphate donated by ATP, constituting the first step of 2 biosynthetic pathways, one leading to arginine and/or urea and the other to pyrimidine nucleotides. The large subunit (synthetase) binds the substrates ammonia (free or transferred from glutamine from the small subunit), hydrogencarbonate and ATP and carries out an ATP-coupled ligase reaction, activating hydrogencarbonate by forming carboxy phosphate which reacts with ammonia to form carbamoyl phosphate. The polypeptide is Carbamoyl phosphate synthase large chain (Limosilactobacillus fermentum (strain NBRC 3956 / LMG 18251) (Lactobacillus fermentum)).